The chain runs to 156 residues: Ribonuclease pancreatic (156 aa).

The signal sequence occupies residues 1-28; sequence MALEKSLVRLLLLVLILLVLGWVQPSLG. The span at 33 to 43 shows a compositional bias: basic and acidic residues; it reads AKKFQRQHMDS. The segment at 33–53 is disordered; sequence AKKFQRQHMDSDSSPSSSSTY. 2 residues coordinate substrate: K35 and R38. The Proton acceptor role is filled by H40. Intrachain disulfides connect C54-C112, C68-C123, C86-C138, and C93-C100. N62 carries N-linked (GlcNAc...) asparagine; partial glycosylation. Residues 69–73 and K94 each bind substrate; that span reads KPVNT. N104 is a glycosylation site (N-linked (GlcNAc...) asparagine). R113 serves as a coordination point for substrate. Residue N116 is glycosylated (N-linked (GlcNAc...) asparagine). H147 serves as the catalytic Proton donor.

The protein belongs to the pancreatic ribonuclease family. Monomer. Interacts with and forms tight 1:1 complexes with RNH1. Dimerization of two such complexes may occur. Interaction with RNH1 inhibits this protein. Post-translationally, N-linked glycans are of complex type. As to expression, pancreas and other tissues and body fluids (indicating it may have other physiological functions besides its role in digestion).

It is found in the secreted. It carries out the reaction an [RNA] containing cytidine + H2O = an [RNA]-3'-cytidine-3'-phosphate + a 5'-hydroxy-ribonucleotide-3'-[RNA].. It catalyses the reaction an [RNA] containing uridine + H2O = an [RNA]-3'-uridine-3'-phosphate + a 5'-hydroxy-ribonucleotide-3'-[RNA].. Endonuclease that catalyzes the cleavage of RNA on the 3' side of pyrimidine nucleotides. Acts on single-stranded and double-stranded RNA. In Homo sapiens (Human), this protein is Ribonuclease pancreatic (RNASE1).